The following is a 288-amino-acid chain: Nucleotide-binding protein APP7_0339 (288 aa).

8-15 (GRSGSGKS) serves as a coordination point for ATP. A GTP-binding site is contributed by 56–59 (DIRN).

This sequence belongs to the RapZ-like family.

Its function is as follows. Displays ATPase and GTPase activities. This Actinobacillus pleuropneumoniae serotype 7 (strain AP76) protein is Nucleotide-binding protein APP7_0339.